Reading from the N-terminus, the 256-residue chain is DNA repair protein RecO (256 aa).

The protein belongs to the RecO family.

Involved in DNA repair and RecF pathway recombination. In Streptococcus pneumoniae serotype 19F (strain G54), this protein is DNA repair protein RecO.